We begin with the raw amino-acid sequence, 483 residues long: HSPB1-associated protein 1 (483 aa).

Residues 1-26 form a disordered region; the sequence is MAAGCEGIAPPTLGERTVGEEGEPVK. Residues 88-208 are interaction with HSPB1; it reads ETECSYVDAT…EDTPFLYPTR (121 aa). The region spanning 124-288 is the JmjC domain; the sequence is WAYADYKYFV…HLARVEEAIT (165 aa). A disordered region spans residues 388–416; it reads LIPVTPASEERGGALEGDSEESVSSNGGH.

As to quaternary structure, interacts with CRYAB and HSPB1.

The protein resides in the cytoplasm. Its function is as follows. May play a role in cellular stress response. This Mus musculus (Mouse) protein is HSPB1-associated protein 1 (Hspbap1).